Consider the following 152-residue polypeptide: Large ribosomal subunit protein uL22 (152 aa).

Positions 124 to 145 (APKKAAAKKAAPAKETTPAATE) are enriched in low complexity. Residues 124–152 (APKKAAAKKAAPAKETTPAATESKTEGAE) form a disordered region.

It belongs to the universal ribosomal protein uL22 family. As to quaternary structure, part of the 50S ribosomal subunit.

Its function is as follows. This protein binds specifically to 23S rRNA; its binding is stimulated by other ribosomal proteins, e.g. L4, L17, and L20. It is important during the early stages of 50S assembly. It makes multiple contacts with different domains of the 23S rRNA in the assembled 50S subunit and ribosome. The globular domain of the protein is located near the polypeptide exit tunnel on the outside of the subunit, while an extended beta-hairpin is found that lines the wall of the exit tunnel in the center of the 70S ribosome. The protein is Large ribosomal subunit protein uL22 of Salinispora tropica (strain ATCC BAA-916 / DSM 44818 / JCM 13857 / NBRC 105044 / CNB-440).